Here is a 435-residue protein sequence, read N- to C-terminus: Protein SUPPRESSOR OF K(+) TRANSPORT GROWTH DEFECT 1 (435 aa).

The MIT domain occupies 7-72; the sequence is EQAIEYVKQA…LRRAEEIRAV (66 aa). The tract at residues 73–113 is disordered; it reads LDEGGSGPGSNGDAAVATRPKTKPKDGEGGGKDGEDPEQSK. Residues 95 to 113 show a composition bias toward basic and acidic residues; the sequence is KPKDGEGGGKDGEDPEQSK. 172 to 179 lines the ATP pocket; that stretch reads GPPGTGKS.

This sequence belongs to the AAA ATPase family. As to quaternary structure, monomer or homodimer (in nucleotide-free form). Decamer, dodecamer or tetradecamer of two stacked respective homooligomeric rings (when bound to ATP); the dodecameric form seems to be predominant. Interacts with members of the ESCRT-III subcomplex such as LIP5, VPS60-1, VPS2.1, VPS20.1, VPS20.2, VPS24-1, VPS32.1, VPS32.2, CHMP1A and VPS24. Binds to PROS/At4g24370. In terms of tissue distribution, mostly expressed in leaves, to a lower extent in seeds, and barely in roots and flowers (at protein level). Particularly expressed in trichomes.

The protein localises to the cytoplasm. The protein resides in the nucleus. It localises to the endosome. It is found in the multivesicular body membrane. Its subcellular location is the prevacuolar compartment membrane. The catalysed reaction is ATP + H2O = ADP + phosphate + H(+). Its activity is regulated as follows. Activated by LIP5 and PROS. In terms of biological role, involved in the transport of biosynthetic membrane proteins from the prevacuolar/endosomal compartment to the vacuole. Required for multivesicular body (MVB) protein sorting. Catalyzes the ATP-dependent dissociation of class E VPS proteins from endosomal membranes, such as the disassembly of the ESCRT-III complex. May also regulate cell cycle. Required during seed development for the formation of mucilage in seed coat and testa. Involved in the maintenance of Na(+)/K(+) homeostasis under salt stress. Required for cell expansion. The protein is Protein SUPPRESSOR OF K(+) TRANSPORT GROWTH DEFECT 1 of Arabidopsis thaliana (Mouse-ear cress).